A 66-amino-acid chain; its full sequence is Small ribosomal subunit protein bS21B (66 aa).

Residues 38-66 (YVKPTQKRKIAKKAAISKAKKEARRSYSY) form a disordered region.

Belongs to the bacterial ribosomal protein bS21 family.

The protein is Small ribosomal subunit protein bS21B of Francisella tularensis subsp. tularensis (strain SCHU S4 / Schu 4).